Here is a 397-residue protein sequence, read N- to C-terminus: Inositol 3-kinase (397 aa).

ATP-binding positions include S228, 278 to 281 (GAGD), and N305. The Proton acceptor role is filled by D281.

It belongs to the carbohydrate kinase pfkB family. As to expression, expressed in roots, leaf blade shoots, leaf sheath shoots and panicles.

The enzyme catalyses myo-inositol + ATP = 1D-myo-inositol 3-phosphate + ADP + H(+). Its function is as follows. Kinase that phosphorylates myo-inositol to produce multiple myo-inositol monophosphates. Participates in phytic acid biosynthesis in developing seeds. Phytic acid is the primary storage form of phosphorus in cereal grains and other plant seeds. The chain is Inositol 3-kinase from Oryza sativa subsp. japonica (Rice).